Here is a 206-residue protein sequence, read N- to C-terminus: Small ribosomal subunit protein uS4 (206 aa).

The tract at residues 23-47 is disordered; that stretch reads AKSPLNRREYGPGQHGQRRKGKLSD. In terms of domain architecture, S4 RNA-binding spans 94-157; the sequence is RRLDAVIYRA…RQLAIVLESV (64 aa).

This sequence belongs to the universal ribosomal protein uS4 family. In terms of assembly, part of the 30S ribosomal subunit. Contacts protein S5. The interaction surface between S4 and S5 is involved in control of translational fidelity.

One of the primary rRNA binding proteins, it binds directly to 16S rRNA where it nucleates assembly of the body of the 30S subunit. Functionally, with S5 and S12 plays an important role in translational accuracy. The chain is Small ribosomal subunit protein uS4 from Paracoccus denitrificans (strain Pd 1222).